A 579-amino-acid polypeptide reads, in one-letter code: Zinc metalloproteinase nas-11 (579 aa).

The signal sequence occupies residues 1 to 17 (MTPSLVFLIVVIVVVEG). The propeptide occupies 18–328 (QGWRPWDRFN…AAPGSSRLKK (311 aa)). Positions 35–58 (WGGNNWGTRQRNQEPHDIPPPVPP) are disordered. A glycan (N-linked (GlcNAc...) asparagine) is linked at Asn256. Residues 293-312 (GDDEIPLPDADTDDEDDDDS) show a composition bias toward acidic residues. Residues 293-323 (GDDEIPLPDADTDDEDDDDSTNSASGAAPGS) form a disordered region. A Peptidase M12A domain is found at 329–536 (SALYFEGNLI…IELLKKMYCQ (208 aa)). Disulfide bonds link Cys375/Cys535, Cys401/Cys421, Cys539/Cys575, Cys546/Cys568, and Cys555/Cys572. Zn(2+) is bound at residue His430. Glu431 is a catalytic residue. 2 residues coordinate Zn(2+): His434 and His440. Asn454 is a glycosylation site (N-linked (GlcNAc...) asparagine). Positions 539 to 575 (CDDKNVYCGAWALKDLCKNPGHDQYMAANCKKSCGLC) constitute a ShKT domain.

The cofactor is Zn(2+). As to expression, expressed in the anterior part of the intestine, CEP neurons and to a lesser extent in hypodermis.

The protein localises to the secreted. In terms of biological role, metalloprotease. In Caenorhabditis elegans, this protein is Zinc metalloproteinase nas-11 (nas-11).